Reading from the N-terminus, the 209-residue chain is D-aminoacyl-tRNA deacylase 1 (209 aa).

Mg(2+) is bound by residues Val4, Gln6, and Cys28. Residues 139 to 140 (GP) carry the Gly-cisPro motif, important for rejection of L-amino acids motif. The disordered stretch occupies residues 142 to 209 (TIELESPAPG…EGDVSSEREP (68 aa)). Basic and acidic residues-rich tracts occupy residues 159–170 (QLSKLEKQQQRK) and 181–194 (SSKE…EDRS). Phosphoserine occurs at positions 197, 204, and 205.

This sequence belongs to the DTD family. In terms of assembly, homodimer. Interacts with CDC45 and TOPBP1. In terms of processing, preferentially phosphorylated in cells arrested early in S phase. Phosphorylation in the C-terminus weakens the interaction with CDC45.

The protein resides in the nucleus. It is found in the cytoplasm. It carries out the reaction glycyl-tRNA(Ala) + H2O = tRNA(Ala) + glycine + H(+). The enzyme catalyses a D-aminoacyl-tRNA + H2O = a tRNA + a D-alpha-amino acid + H(+). In terms of biological role, an aminoacyl-tRNA editing enzyme that deacylates mischarged D-aminoacyl-tRNAs. Also deacylates mischarged glycyl-tRNA(Ala), protecting cells against glycine mischarging by AlaRS. Acts via tRNA-based rather than protein-based catalysis; rejects L-amino acids rather than detecting D-amino acids in the active site. By recycling D-aminoacyl-tRNA to D-amino acids and free tRNA molecules, this enzyme counteracts the toxicity associated with the formation of D-aminoacyl-tRNA entities in vivo and helps enforce protein L-homochirality. Functionally, ATPase involved in DNA replication, may facilitate loading of CDC45 onto pre-replication complexes. This Bos taurus (Bovine) protein is D-aminoacyl-tRNA deacylase 1 (DTD1).